The chain runs to 573 residues: Ribosomal RNA-processing protein 9 (573 aa).

Residues 1 to 63 form a disordered region; sequence MSDVTQQKKR…FEGENPADKR (63 aa). The residue at position 2 (Ser-2) is an N-acetylserine. Over residues 25-58 the composition is skewed to acidic residues; sequence DEEITDPSSNEDEQLEVSDEEDALESEEEFEGEN. Residues 32–106 are a coiled coil; the sequence is SSNEDEQLEV…KERTIDEYNN (75 aa). A Phosphoserine modification is found at Ser-50. 6 WD repeats span residues 234–273, 278–317, 320–359, 397–435, 471–509, and 516–562; these read GHYD…PVKV, DRRG…QLEI, GHHD…RLTF, FCEG…PIFT, QPFW…RSFE, and GAKG…ARNG.

The protein belongs to the WD repeat RRP9 family. In terms of assembly, interacts with UTP25. Component of the ribosomal small subunit (SSU) processome composed of at least 40 protein subunits and snoRNA U3.

Its subcellular location is the nucleus. The protein resides in the nucleolus. In terms of biological role, involved in nucleolar processing of pre-18S ribosomal RNA. Required for efficient pre-rRNA cleavage at sites A0, A1 and A2, and biosynthesis of 18S rRNA. This chain is Ribosomal RNA-processing protein 9 (RRP9), found in Saccharomyces cerevisiae (strain ATCC 204508 / S288c) (Baker's yeast).